The following is a 258-amino-acid chain: Small ribosomal subunit protein mS35 (258 aa).

A mitochondrion-targeting transit peptide spans 1 to 39 (MAFNPLLSLLKADAIFLGQLSKSSFCATSRAFSVFYFTR).

Belongs to the mitochondrion-specific ribosomal protein mS35 family. Component of the mitochondrial small ribosomal subunit (mt-SSU). Mature yeast 74S mitochondrial ribosomes consist of a small (37S) and a large (54S) subunit. The 37S small subunit contains a 15S ribosomal RNA (15S mt-rRNA) and at least 32 different proteins. The 54S large subunit contains a 21S rRNA (21S mt-rRNA) and at least 45 different proteins.

It is found in the mitochondrion. Component of the mitochondrial ribosome (mitoribosome), a dedicated translation machinery responsible for the synthesis of mitochondrial genome-encoded proteins, including at least some of the essential transmembrane subunits of the mitochondrial respiratory chain. The mitoribosomes are attached to the mitochondrial inner membrane and translation products are cotranslationally integrated into the membrane. This is Small ribosomal subunit protein mS35 (rsm24) from Schizosaccharomyces pombe (strain 972 / ATCC 24843) (Fission yeast).